We begin with the raw amino-acid sequence, 100 residues long: NADH-quinone oxidoreductase subunit K (100 aa).

Transmembrane regions (helical) follow at residues 2–22 (ITLT…LVGI), 29–49 (LMLF…LAAF), and 63–83 (FFII…LIIW).

This sequence belongs to the complex I subunit 4L family. NDH-1 is composed of 14 different subunits. Subunits NuoA, H, J, K, L, M, N constitute the membrane sector of the complex.

It localises to the cell inner membrane. The enzyme catalyses a quinone + NADH + 5 H(+)(in) = a quinol + NAD(+) + 4 H(+)(out). Functionally, NDH-1 shuttles electrons from NADH, via FMN and iron-sulfur (Fe-S) centers, to quinones in the respiratory chain. The immediate electron acceptor for the enzyme in this species is believed to be ubiquinone. Couples the redox reaction to proton translocation (for every two electrons transferred, four hydrogen ions are translocated across the cytoplasmic membrane), and thus conserves the redox energy in a proton gradient. This chain is NADH-quinone oxidoreductase subunit K, found in Nitratiruptor sp. (strain SB155-2).